A 562-amino-acid chain; its full sequence is Extracellular matrix protein 1 (562 aa).

Residues Met1–Ala19 form the signal peptide. Disordered stretches follow at residues Gly46–Glu87 and Gln119–Ala171. Residues Ile129–Pro154 are compositionally biased toward basic and acidic residues. Repeat copies occupy residues Arg172–Tyr301 and Pro305–Tyr427. The 2 X approximate repeats stretch occupies residues Arg172–Tyr427. Residues Asn376, Asn466, and Asn538 are each glycosylated (N-linked (GlcNAc...) asparagine). The interval Ala539 to Glu562 is disordered. Residues Gly543–Asn552 show a composition bias toward gly residues. Ser559 bears the Phosphoserine mark.

As to quaternary structure, interacts (via C-terminus) with HSPG2 (via C-terminus). Interacts with EFEMP1/FBLN3 and LAMB3. Interacts with MMP9.

It is found in the secreted. The protein localises to the extracellular space. The protein resides in the extracellular matrix. Functionally, involved in endochondral bone formation as negative regulator of bone mineralization. Stimulates the proliferation of endothelial cells and promotes angiogenesis. Inhibits MMP9 proteolytic activity. This Rattus norvegicus (Rat) protein is Extracellular matrix protein 1 (Ecm1).